We begin with the raw amino-acid sequence, 321 residues long: tRNA(Ile)-lysidine synthase (321 aa).

Position 20–25 (S20–S25) interacts with ATP.

Belongs to the tRNA(Ile)-lysidine synthase family.

It is found in the cytoplasm. It carries out the reaction cytidine(34) in tRNA(Ile2) + L-lysine + ATP = lysidine(34) in tRNA(Ile2) + AMP + diphosphate + H(+). In terms of biological role, ligates lysine onto the cytidine present at position 34 of the AUA codon-specific tRNA(Ile) that contains the anticodon CAU, in an ATP-dependent manner. Cytidine is converted to lysidine, thus changing the amino acid specificity of the tRNA from methionine to isoleucine. The sequence is that of tRNA(Ile)-lysidine synthase from Bordetella pertussis (strain Tohama I / ATCC BAA-589 / NCTC 13251).